The chain runs to 257 residues: MSDLKKAAQKAIELMDLTTLNDDDTDQKVIELCHKAKTPAGNTAAICIYPRFIPIARKTLNEMGCEEIKIATVTNFPHGNDDIAIAVLETRAAVAYGADEVDVVFPYRALMEGNETVGYELVKACKEACGDDVLLKVIIESGVLQDPALIRKASELSIDAGADFIKTSTGKVEVNATLEAAEIMMTVIAEKNPKVGFKPAGGVRDAAAAEEFLGVAERLLGKGWATPRTFRFGASSLLNNLLHTLELAEAPKGPQGY.

Residue Asp102 is the Proton donor/acceptor of the active site. The active-site Schiff-base intermediate with acetaldehyde is Lys166. Catalysis depends on Lys198, which acts as the Proton donor/acceptor.

This sequence belongs to the DeoC/FbaB aldolase family. DeoC type 2 subfamily.

Its subcellular location is the cytoplasm. It carries out the reaction 2-deoxy-D-ribose 5-phosphate = D-glyceraldehyde 3-phosphate + acetaldehyde. It participates in carbohydrate degradation; 2-deoxy-D-ribose 1-phosphate degradation; D-glyceraldehyde 3-phosphate and acetaldehyde from 2-deoxy-alpha-D-ribose 1-phosphate: step 2/2. In terms of biological role, catalyzes a reversible aldol reaction between acetaldehyde and D-glyceraldehyde 3-phosphate to generate 2-deoxy-D-ribose 5-phosphate. The polypeptide is Deoxyribose-phosphate aldolase (Shewanella loihica (strain ATCC BAA-1088 / PV-4)).